The chain runs to 454 residues: UDP-N-acetylmuramoylalanine--D-glutamate ligase (454 aa).

ATP is bound at residue 115 to 121 (GTNGKTT).

Belongs to the MurCDEF family.

Its subcellular location is the cytoplasm. The catalysed reaction is UDP-N-acetyl-alpha-D-muramoyl-L-alanine + D-glutamate + ATP = UDP-N-acetyl-alpha-D-muramoyl-L-alanyl-D-glutamate + ADP + phosphate + H(+). Its pathway is cell wall biogenesis; peptidoglycan biosynthesis. Its function is as follows. Cell wall formation. Catalyzes the addition of glutamate to the nucleotide precursor UDP-N-acetylmuramoyl-L-alanine (UMA). This is UDP-N-acetylmuramoylalanine--D-glutamate ligase from Thermoanaerobacter pseudethanolicus (strain ATCC 33223 / 39E) (Clostridium thermohydrosulfuricum).